A 97-amino-acid chain; its full sequence is Citrate lyase acyl carrier protein (97 aa).

Serine 14 is subject to O-(phosphoribosyl dephospho-coenzyme A)serine.

It belongs to the CitD family. As to quaternary structure, oligomer with a subunit composition of (alpha,beta,gamma)6.

The protein localises to the cytoplasm. Covalent carrier of the coenzyme of citrate lyase. The polypeptide is Citrate lyase acyl carrier protein (Yersinia enterocolitica serotype O:8 / biotype 1B (strain NCTC 13174 / 8081)).